A 260-amino-acid chain; its full sequence is Ribosomal RNA small subunit methyltransferase J (260 aa).

S-adenosyl-L-methionine contacts are provided by residues 125–126 and aspartate 179; that span reads ER.

Belongs to the methyltransferase superfamily. RsmJ family.

It is found in the cytoplasm. It carries out the reaction guanosine(1516) in 16S rRNA + S-adenosyl-L-methionine = N(2)-methylguanosine(1516) in 16S rRNA + S-adenosyl-L-homocysteine + H(+). Specifically methylates the guanosine in position 1516 of 16S rRNA. This Pseudomonas fluorescens (strain Pf0-1) protein is Ribosomal RNA small subunit methyltransferase J.